The sequence spans 374 residues: Patatin-2-Kuras 1 (374 aa).

The first 11 residues, 1 to 11 (MILATTGSTCA), serve as a signal peptide directing secretion. The 198-residue stretch at 20-217 (LSIDGGGIKG…TVGDPALLSL (198 aa)) folds into the PNPLA domain. Residues 24 to 29 (GGGIKG) carry the GXGXXG motif. The short motif at 63–67 (GTSTG) is the GXSXG element. Residue S65 is the Nucleophile of the active site. N-linked (GlcNAc...) asparagine glycosylation occurs at N103. D203 functions as the Proton acceptor in the catalytic mechanism. The DGA/G motif lies at 203–205 (DGA). Positions 309 to 372 (ENALTGTTTE…DRKKLRANKA (64 aa)) form a coiled coil.

Belongs to the patatin family. Tuber.

It is found in the vacuole. Functionally, probable lipolytic acyl hydrolase (LAH), an activity which is thought to be involved in the response of tubers to pathogens. This chain is Patatin-2-Kuras 1 (pat2-k1), found in Solanum tuberosum (Potato).